The following is a 509-amino-acid chain: MQFLWLCLLSAVTLQFTGTLAFYPIKLPDFTKGLVSNHGSIDRRFFTFPGLYKHAHTGSTTLNIRRGPSNYRRDNNYPAQIASPPTAPNTLGINNDGYDFSYFSEVKVGSEGQKMWMLIDTGASGTWVFGSDCTSKACGRHNTFGKEDSKTIKVTDEKWGVTYGTGKVSGVIVNDTMSFAGFELVTPFGSASTASDDFLNYPMDGILGIGPQDPNAKTPTVVQLLMQQKLLKSNVIGINLQRASEGATDGQITFGDIDKSKFSGELIYSNVVPDGYQWEIAMDDLIMDGKSLNLKGRTGIIDTGTSFLILPPADADLIHSMIPQANKGSGFYTLPCSTKVDIKLSIGGVEYTIQPDDYVGNETATKGTCNSLIVGRQILGPKQWLVGDVFLKNVYSVFDFDKNRVGLAARKYAGTKNPPSSTPSPGMFLLHAILCPKTISVLMLHIDPTSNKAPSGGSPGLPAESGSDSTTNGEATNGATSSPNSSSSVLTPTWLTLAVFFAIGSSLWS.

The signal sequence occupies residues 1–21; sequence MQFLWLCLLSAVTLQFTGTLA. The Peptidase A1 domain maps to 102–408; that stretch reads YFSEVKVGSE…DFDKNRVGLA (307 aa). Aspartate 120 is an active-site residue. A glycan (N-linked (GlcNAc...) asparagine) is linked at asparagine 174. The active site involves aspartate 302. Asparagine 361 carries N-linked (GlcNAc...) asparagine glycosylation. The interval 451-489 is disordered; that stretch reads NKAPSGGSPGLPAESGSDSTTNGEATNGATSSPNSSSSV. The span at 466–480 shows a compositional bias: polar residues; that stretch reads GSDSTTNGEATNGAT. N-linked (GlcNAc...) asparagine glycosylation is present at asparagine 484. Serine 485 is lipidated: GPI-anchor amidated serine. A propeptide spans 486–509 (removed in mature form); the sequence is SSSVLTPTWLTLAVFFAIGSSLWS.

It belongs to the peptidase A1 family.

Its subcellular location is the cell membrane. Functionally, probable GPI-anchored aspartic-type endopeptidase which contributes to virulence. The sequence is that of Probable aspartic-type endopeptidase CTSD (CTSD) from Trichophyton verrucosum (strain HKI 0517).